A 243-amino-acid chain; its full sequence is Small ribosomal subunit protein uS3 (243 aa).

One can recognise a KH type-2 domain in the interval 39–110 (IRTFIQKKYG…QVRINVVEVE (72 aa)). A disordered region spans residues 216-243 (KTIPVGASPKRKAGRRPQQFEDRSNENS). Basic and acidic residues predominate over residues 233–243 (QQFEDRSNENS).

It belongs to the universal ribosomal protein uS3 family. As to quaternary structure, part of the 30S ribosomal subunit. Forms a tight complex with proteins S10 and S14.

In terms of biological role, binds the lower part of the 30S subunit head. Binds mRNA in the 70S ribosome, positioning it for translation. This Prochlorococcus marinus (strain MIT 9312) protein is Small ribosomal subunit protein uS3.